We begin with the raw amino-acid sequence, 218 residues long: Thiopurine S-methyltransferase (218 aa).

Positions 10, 45, 66, and 123 each coordinate S-adenosyl-L-methionine.

Belongs to the class I-like SAM-binding methyltransferase superfamily. TPMT family.

Its subcellular location is the cytoplasm. It catalyses the reaction S-adenosyl-L-methionine + a thiopurine = S-adenosyl-L-homocysteine + a thiopurine S-methylether.. The polypeptide is Thiopurine S-methyltransferase (Pseudomonas paraeruginosa (strain DSM 24068 / PA7) (Pseudomonas aeruginosa (strain PA7))).